The sequence spans 158 residues: AP-1 complex subunit sigma-1A (158 aa).

Ser147 is subject to Phosphoserine.

This sequence belongs to the adaptor complexes small subunit family. As to quaternary structure, adaptor protein complex 1 (AP-1) is a heterotetramer composed of two large adaptins (gamma-type subunit AP1G1 and beta-type subunit AP1B1), a medium adaptin (mu-type subunit AP1M1 or AP1M2) and a small adaptin (sigma-type subunit AP1S1 or AP1S2 or AP1S3). As to expression, widely expressed.

The protein resides in the golgi apparatus. It localises to the cytoplasmic vesicle membrane. It is found in the membrane. Its subcellular location is the clathrin-coated pit. Subunit of clathrin-associated adaptor protein complex 1 that plays a role in protein sorting in the late-Golgi/trans-Golgi network (TGN) and/or endosomes. The AP complexes mediate both the recruitment of clathrin to membranes and the recognition of sorting signals within the cytosolic tails of transmembrane cargo molecules. The sequence is that of AP-1 complex subunit sigma-1A (AP1S1) from Homo sapiens (Human).